The following is a 1760-amino-acid chain: Chitin synthase A (1760 aa).

N-linked (GlcNAc...) asparagine glycosylation is present at asparagine 157. The next 2 helical transmembrane spans lie at 729 to 749 (IWTGFVWALTFWIPSFVLRFV) and 765 to 785 (LVLVFLILLFNAIVCFYIIAF). 2 N-linked (GlcNAc...) asparagine glycosylation sites follow: asparagine 876 and asparagine 996. The chain crosses the membrane as a helical span at residues 1027 to 1047 (ILLAFTCLICAVILVKFLAAL). Asparagine 1392 is a glycosylation site (N-linked (GlcNAc...) asparagine). The next 3 helical transmembrane spans lie at 1417–1437 (FVVLVDLLGTIILPATCVYLG), 1449–1469 (IPIISIAILAGVYGLQAIIFI), and 1477–1497 (IGWMIIYICAYPIYSFVLPMY). N-linked (GlcNAc...) asparagine glycans are attached at residues asparagine 1557, asparagine 1645, and asparagine 1650. The disordered stretch occupies residues 1670–1691 (DNLLGVPRPNSRSPVGGYTSRP). A DEK-C domain is found at 1702 to 1758 (GPDEMAITDAIRSCLAEVDLDTVTKKQVRALVEQRLQATLTGDKRAFLDRQIDQELA).

It belongs to the chitin synthase family. Class V subfamily.

It localises to the cell membrane. It carries out the reaction [(1-&gt;4)-N-acetyl-beta-D-glucosaminyl](n) + UDP-N-acetyl-alpha-D-glucosamine = [(1-&gt;4)-N-acetyl-beta-D-glucosaminyl](n+1) + UDP + H(+). In terms of biological role, polymerizes chitin, a structural polymer of the cell wall and septum, by transferring the sugar moiety of UDP-GlcNAc to the non-reducing end of the growing chitin polymer. Plays an important role in cell-wall formation during both hyphal growth and conidiation. The sequence is that of Chitin synthase A from Aspergillus oryzae (strain ATCC 42149 / RIB 40) (Yellow koji mold).